A 409-amino-acid chain; its full sequence is Multifunctional CCA protein (409 aa).

ATP is bound by residues glycine 8 and arginine 11. Positions 8 and 11 each coordinate CTP. 2 residues coordinate Mg(2+): aspartate 21 and aspartate 23. The ATP site is built by arginine 91, arginine 137, and arginine 140. CTP is bound by residues arginine 91, arginine 137, and arginine 140. The 102-residue stretch at 228 to 329 folds into the HD domain; the sequence is TGIHTLMVVE…ITLMDQNDAW (102 aa).

This sequence belongs to the tRNA nucleotidyltransferase/poly(A) polymerase family. Bacterial CCA-adding enzyme type 1 subfamily. In terms of assembly, monomer. Can also form homodimers and oligomers. It depends on Mg(2+) as a cofactor. Ni(2+) serves as cofactor.

The enzyme catalyses a tRNA precursor + 2 CTP + ATP = a tRNA with a 3' CCA end + 3 diphosphate. The catalysed reaction is a tRNA with a 3' CCA end + 2 CTP + ATP = a tRNA with a 3' CCACCA end + 3 diphosphate. Its function is as follows. Catalyzes the addition and repair of the essential 3'-terminal CCA sequence in tRNAs without using a nucleic acid template. Adds these three nucleotides in the order of C, C, and A to the tRNA nucleotide-73, using CTP and ATP as substrates and producing inorganic pyrophosphate. tRNA 3'-terminal CCA addition is required both for tRNA processing and repair. Also involved in tRNA surveillance by mediating tandem CCA addition to generate a CCACCA at the 3' terminus of unstable tRNAs. While stable tRNAs receive only 3'-terminal CCA, unstable tRNAs are marked with CCACCA and rapidly degraded. The polypeptide is Multifunctional CCA protein (Psychromonas ingrahamii (strain DSM 17664 / CCUG 51855 / 37)).